The following is a 366-amino-acid chain: Chorismate synthase (366 aa).

Arg-48 contacts NADP(+). FMN is bound by residues 125 to 127, Gly-285, 300 to 304, and Arg-327; these read RSS and KPTPS.

The protein belongs to the chorismate synthase family. FMNH2 is required as a cofactor.

It catalyses the reaction 5-O-(1-carboxyvinyl)-3-phosphoshikimate = chorismate + phosphate. The protein operates within metabolic intermediate biosynthesis; chorismate biosynthesis; chorismate from D-erythrose 4-phosphate and phosphoenolpyruvate: step 7/7. In terms of biological role, catalyzes the anti-1,4-elimination of the C-3 phosphate and the C-6 proR hydrogen from 5-enolpyruvylshikimate-3-phosphate (EPSP) to yield chorismate, which is the branch point compound that serves as the starting substrate for the three terminal pathways of aromatic amino acid biosynthesis. This reaction introduces a second double bond into the aromatic ring system. The sequence is that of Chorismate synthase from Methanococcoides burtonii (strain DSM 6242 / NBRC 107633 / OCM 468 / ACE-M).